Consider the following 468-residue polypeptide: Argininosuccinate lyase (468 aa).

The protein belongs to the lyase 1 family. Argininosuccinate lyase subfamily.

It localises to the cytoplasm. It catalyses the reaction 2-(N(omega)-L-arginino)succinate = fumarate + L-arginine. Its pathway is amino-acid biosynthesis; L-arginine biosynthesis; L-arginine from L-ornithine and carbamoyl phosphate: step 3/3. The polypeptide is Argininosuccinate lyase (Sphingopyxis alaskensis (strain DSM 13593 / LMG 18877 / RB2256) (Sphingomonas alaskensis)).